We begin with the raw amino-acid sequence, 199 residues long: uncharacterized protein (199 aa).

The G-patch domain occupies P112–K160.

This is an uncharacterized protein from Schizosaccharomyces pombe (strain 972 / ATCC 24843) (Fission yeast).